A 108-amino-acid polypeptide reads, in one-letter code: ATPase inhibitor, mitochondrial (108 aa).

The N-terminal 25 residues, 1–25, are a transit peptide targeting the mitochondrion; that stretch reads MAATALAVRSRIGAWSVWAMQSRGF. The segment at 25–48 is disordered; sequence FSSDTPEGVRSGAGAVRDAGGAFG. The interval 26–52 is N-terminal inhibitory region; sequence SSDTPEGVRSGAGAVRDAGGAFGKKEQ. Residues 69–108 are a coiled coil; that stretch reads ALKKHHENEISHHVKEIERLQKEIERHKQSIKKLKNDDDD. The segment at 74–106 is antiparallel alpha-helical coiled coil region; sequence HENEISHHVKEIERLQKEIERHKQSIKKLKNDD. The residue at position 103 (lysine 103) is an N6-succinyllysine.

Belongs to the ATPase inhibitor family. In terms of assembly, homodimer; represents the active form and is present at a pH value below 6.5. Homotetramer; represents the inactive form and is present at a pH value above 7.0.

It is found in the mitochondrion. Endogenous F(1)F(o)-ATPase inhibitor limiting ATP depletion when the mitochondrial membrane potential falls below a threshold and the F(1)F(o)-ATP synthase starts hydrolyzing ATP to pump protons out of the mitochondrial matrix. Required to avoid the consumption of cellular ATP when the F(1)F(o)-ATP synthase enzyme acts as an ATP hydrolase. Indirectly acts as a regulator of heme synthesis in erythroid tissues: regulates heme synthesis by modulating the mitochondrial pH and redox potential, allowing FECH to efficiently catalyze the incorporation of iron into protoporphyrin IX to produce heme. The sequence is that of ATPase inhibitor, mitochondrial from Sus scrofa (Pig).